We begin with the raw amino-acid sequence, 500 residues long: Cytochrome P450 2D26 (500 aa).

Ser-249 carries the post-translational modification Phosphoserine. Cys-446 is a heme binding site.

Belongs to the cytochrome P450 family. Heme is required as a cofactor.

It is found in the endoplasmic reticulum membrane. The protein localises to the microsome membrane. It carries out the reaction an organic molecule + reduced [NADPH--hemoprotein reductase] + O2 = an alcohol + oxidized [NADPH--hemoprotein reductase] + H2O + H(+). Its function is as follows. Cytochromes P450 are a group of heme-thiolate monooxygenases. In liver microsomes, this enzyme is involved in an NADPH-dependent electron transport pathway. It oxidizes a variety of structurally unrelated compounds, including steroids, fatty acids, and xenobiotics. In Rattus norvegicus (Rat), this protein is Cytochrome P450 2D26 (Cyp2d26).